The following is a 99-amino-acid chain: Large ribosomal subunit protein uL23 (99 aa).

This sequence belongs to the universal ribosomal protein uL23 family. As to quaternary structure, part of the 50S ribosomal subunit. Contacts protein L29, and trigger factor when it is bound to the ribosome.

One of the early assembly proteins it binds 23S rRNA. One of the proteins that surrounds the polypeptide exit tunnel on the outside of the ribosome. Forms the main docking site for trigger factor binding to the ribosome. The sequence is that of Large ribosomal subunit protein uL23 from Saccharopolyspora erythraea (strain ATCC 11635 / DSM 40517 / JCM 4748 / NBRC 13426 / NCIMB 8594 / NRRL 2338).